The chain runs to 224 residues: Urease accessory protein UreF (224 aa).

The protein belongs to the UreF family. UreD, UreF and UreG form a complex that acts as a GTP-hydrolysis-dependent molecular chaperone, activating the urease apoprotein by helping to assemble the nickel containing metallocenter of UreC. The UreE protein probably delivers the nickel.

It localises to the cytoplasm. Its function is as follows. Required for maturation of urease via the functional incorporation of the urease nickel metallocenter. This chain is Urease accessory protein UreF, found in Citrobacter koseri (strain ATCC BAA-895 / CDC 4225-83 / SGSC4696).